The chain runs to 488 residues: Inosine-5'-monophosphate dehydrogenase (488 aa).

2 CBS domains span residues 95 to 153 (VISN…SIKI) and 157 to 216 (MTKD…AKDE). NAD(+) contacts are provided by residues aspartate 250 and 300–302 (GIG). K(+)-binding residues include glycine 302 and glycine 304. Residue serine 305 coordinates IMP. Residue cysteine 307 participates in K(+) binding. The Thioimidate intermediate role is filled by cysteine 307. IMP-binding positions include 340-342 (DGG), 363-364 (GS), and 387-391 (YRGMG). Arginine 403 acts as the Proton acceptor in catalysis. IMP is bound at residue glutamate 417. Residues 467–488 (AGLAESHPHNVQITKESPNYSF) are disordered. K(+) contacts are provided by glutamate 471, serine 472, and histidine 473. Positions 475-488 (HNVQITKESPNYSF) are enriched in polar residues.

The protein belongs to the IMPDH/GMPR family. As to quaternary structure, homotetramer. Requires K(+) as cofactor.

The catalysed reaction is IMP + NAD(+) + H2O = XMP + NADH + H(+). Its pathway is purine metabolism; XMP biosynthesis via de novo pathway; XMP from IMP: step 1/1. With respect to regulation, mycophenolic acid (MPA) is a non-competitive inhibitor that prevents formation of the closed enzyme conformation by binding to the same site as the amobile flap. In contrast, mizoribine monophosphate (MZP) is a competitive inhibitor that induces the closed conformation. MPA is a potent inhibitor of mammalian IMPDHs but a poor inhibitor of the bacterial enzymes. MZP is a more potent inhibitor of bacterial IMPDH. In terms of biological role, catalyzes the conversion of inosine 5'-phosphate (IMP) to xanthosine 5'-phosphate (XMP), the first committed and rate-limiting step in the de novo synthesis of guanine nucleotides, and therefore plays an important role in the regulation of cell growth. The sequence is that of Inosine-5'-monophosphate dehydrogenase from Staphylococcus epidermidis (strain ATCC 35984 / DSM 28319 / BCRC 17069 / CCUG 31568 / BM 3577 / RP62A).